The primary structure comprises 201 residues: Probable quinol oxidase subunit 3 (201 aa).

A run of 5 helical transmembrane segments spans residues 20-40 (LGFW…FATL), 62-82 (LILI…IAIY), 91-111 (LMMF…GFEI), 133-153 (FFIL…WVIC), and 172-192 (FIVS…FTAV).

It belongs to the cytochrome c oxidase subunit 3 family.

The protein resides in the cell membrane. The enzyme catalyses 2 a quinol + O2 = 2 a quinone + 2 H2O. Functionally, catalyzes quinol oxidation with the concomitant reduction of oxygen to water. In Staphylococcus epidermidis (strain ATCC 35984 / DSM 28319 / BCRC 17069 / CCUG 31568 / BM 3577 / RP62A), this protein is Probable quinol oxidase subunit 3 (qoxC).